The sequence spans 248 residues: UPF0736 protein ABC2536 (248 aa).

This sequence belongs to the UPF0736 family.

This is UPF0736 protein ABC2536 from Shouchella clausii (strain KSM-K16) (Alkalihalobacillus clausii).